The primary structure comprises 224 residues: Phosphoribosylformylglycinamidine synthase subunit PurQ (224 aa).

The Glutamine amidotransferase type-1 domain occupies 2 to 224 (KFAVIQFPGS…SILNHAEVKA (223 aa)). The Nucleophile role is filled by Cys-86. Catalysis depends on residues His-195 and Glu-197.

Part of the FGAM synthase complex composed of 1 PurL, 1 PurQ and 2 PurS subunits.

It localises to the cytoplasm. The enzyme catalyses N(2)-formyl-N(1)-(5-phospho-beta-D-ribosyl)glycinamide + L-glutamine + ATP + H2O = 2-formamido-N(1)-(5-O-phospho-beta-D-ribosyl)acetamidine + L-glutamate + ADP + phosphate + H(+). It catalyses the reaction L-glutamine + H2O = L-glutamate + NH4(+). Its pathway is purine metabolism; IMP biosynthesis via de novo pathway; 5-amino-1-(5-phospho-D-ribosyl)imidazole from N(2)-formyl-N(1)-(5-phospho-D-ribosyl)glycinamide: step 1/2. Functionally, part of the phosphoribosylformylglycinamidine synthase complex involved in the purines biosynthetic pathway. Catalyzes the ATP-dependent conversion of formylglycinamide ribonucleotide (FGAR) and glutamine to yield formylglycinamidine ribonucleotide (FGAM) and glutamate. The FGAM synthase complex is composed of three subunits. PurQ produces an ammonia molecule by converting glutamine to glutamate. PurL transfers the ammonia molecule to FGAR to form FGAM in an ATP-dependent manner. PurS interacts with PurQ and PurL and is thought to assist in the transfer of the ammonia molecule from PurQ to PurL. The sequence is that of Phosphoribosylformylglycinamidine synthase subunit PurQ from Lactobacillus delbrueckii subsp. bulgaricus (strain ATCC 11842 / DSM 20081 / BCRC 10696 / JCM 1002 / NBRC 13953 / NCIMB 11778 / NCTC 12712 / WDCM 00102 / Lb 14).